The chain runs to 513 residues: MAFSQYISLAPELLLATAIFCLVFWMVRASRTQVPKGLKNPPGPWGLPFIGHMLTVGKNPHLSLTRLSQQYGDVLQIRIGSTPVVVLSGLNTIKQALVRQGDDFKGRPDLYSFTLITNGKSMTFNPDSGPVWAARRRLAQDALKSFSIASDPTSASSCYLEEHVSKEANHLVSKLQKAMAEVGHFEPVSQVVESVANVIGAMCFGKNFPRKSEEMLNIVNNSKDFVENVTSGNAVDFFPVLRYLPNPALKRFKTFNDNFVLFLQKTVQEHYQDFNKNSIQDITSALFKHSENYKDNGGLIPEEKIVNIVNDIFGAGFDTVTTAITWSILLLVTWPNVQRKIHEELDTVVGRDRQPRLSDRPQLPYLEAFILEIYRYTSFVPFTIPHSTTRDTSLNGFHIPKERCIYINQWQVNHDEKQWKDPFVFRPERFLTNNNSAIDKTQSEKVMLFGLGKRRCIGEIPAKWEVFLFLAILLQHLEFSVPPGVKVDLTPNYGLTMKPGTCEHVQAWPRFSK.

Residue Ser68 is glycosylated (O-linked (GlcNAc) serine). Phe225 provides a ligand contact to substrate. Cys456 serves as a coordination point for heme.

The protein belongs to the cytochrome P450 family. As to quaternary structure, interacts with PGRMC1; the interaction requires PGRMC1 homodimerization. The cofactor is heme.

It is found in the endoplasmic reticulum membrane. Its subcellular location is the microsome membrane. It carries out the reaction an organic molecule + reduced [NADPH--hemoprotein reductase] + O2 = an alcohol + oxidized [NADPH--hemoprotein reductase] + H2O + H(+). The catalysed reaction is 17beta-estradiol + reduced [NADPH--hemoprotein reductase] + O2 = 2-hydroxy-17beta-estradiol + oxidized [NADPH--hemoprotein reductase] + H2O + H(+). It catalyses the reaction 17beta-estradiol + reduced [NADPH--hemoprotein reductase] + O2 = 4-hydroxy-17beta-estradiol + oxidized [NADPH--hemoprotein reductase] + H2O + H(+). The enzyme catalyses estrone + reduced [NADPH--hemoprotein reductase] + O2 = 2-hydroxyestrone + oxidized [NADPH--hemoprotein reductase] + H2O + H(+). It carries out the reaction estrone + reduced [NADPH--hemoprotein reductase] + O2 = 4-hydroxyestrone + oxidized [NADPH--hemoprotein reductase] + H2O + H(+). The catalysed reaction is cholesterol + reduced [NADPH--hemoprotein reductase] + O2 = 25-hydroxycholesterol + oxidized [NADPH--hemoprotein reductase] + H2O + H(+). It catalyses the reaction all-trans-retinol + reduced [NADPH--hemoprotein reductase] + O2 = all-trans-retinal + oxidized [NADPH--hemoprotein reductase] + 2 H2O + H(+). The enzyme catalyses all-trans-retinal + reduced [NADPH--hemoprotein reductase] + O2 = all-trans-retinoate + oxidized [NADPH--hemoprotein reductase] + H2O + 2 H(+). It carries out the reaction (5Z,8Z,11Z,14Z)-eicosatetraenoate + reduced [NADPH--hemoprotein reductase] + O2 = (14R,15S)-epoxy-(5Z,8Z,11Z)-eicosatrienoate + oxidized [NADPH--hemoprotein reductase] + H2O + H(+). The catalysed reaction is (5Z,8Z,11Z,14Z)-eicosatetraenoate + reduced [NADPH--hemoprotein reductase] + O2 = (14S,15R)-epoxy-(5Z,8Z,11Z)-eicosatrienoate + oxidized [NADPH--hemoprotein reductase] + H2O + H(+). It catalyses the reaction (5Z,8Z,11Z,14Z,17Z)-eicosapentaenoate + reduced [NADPH--hemoprotein reductase] + O2 = (17R,18S)-epoxy-(5Z,8Z,11Z,14Z)-eicosatetraenoate + oxidized [NADPH--hemoprotein reductase] + H2O + H(+). The enzyme catalyses (4Z,7Z,10Z,13Z,16Z,19Z)-docosahexaenoate + reduced [NADPH--hemoprotein reductase] + O2 = (19R,20S)-epoxy-(4Z,7Z,10Z,13Z,16Z)-docosapentaenoate + oxidized [NADPH--hemoprotein reductase] + H2O + H(+). It carries out the reaction (5S)-hydroperoxy-(6E,8Z,11Z,14Z)-eicosatetraenoate = 5-oxo-(6E,8Z,11Z,14Z)-eicosatetraenoate + H2O. The catalysed reaction is (12S)-hydroperoxy-(5Z,8Z,10E,14Z)-eicosatetraenoate = 12-oxo-(5Z,8Z,10E,14Z)-eicosatetraenoate + H2O. It catalyses the reaction (15S)-hydroperoxy-(5Z,8Z,11Z,13E)-eicosatetraenoate = 15-oxo-(5Z,8Z,11Z,13E)-eicosatetraenoate + H2O. The enzyme catalyses (13S)-hydroperoxy-(9Z,11E)-octadecadienoate = 13-oxo-(9Z,11E)-octadecadienoate + H2O. It carries out the reaction (5Z,8Z,11Z,14Z)-eicosatetraenoate + reduced [NADPH--hemoprotein reductase] + O2 = 13-hydroxy-(5Z,8Z,11Z,14Z)-eicosatetraenoate + oxidized [NADPH--hemoprotein reductase] + H2O + H(+). The catalysed reaction is (5Z,8Z,11Z,14Z)-eicosatetraenoate + reduced [NADPH--hemoprotein reductase] + O2 = 19-hydroxy-(5Z,8Z,11Z,14Z)-eicosatetraenoate + oxidized [NADPH--hemoprotein reductase] + H2O + H(+). It catalyses the reaction (9Z,12Z)-octadecadienoate + reduced [NADPH--hemoprotein reductase] + O2 = 11-hydroxy-(9Z,12Z)-octadecadienoate + oxidized [NADPH--hemoprotein reductase] + H2O + H(+). Its pathway is cofactor metabolism; retinol metabolism. It functions in the pathway steroid metabolism; cholesterol metabolism. It participates in lipid metabolism; arachidonate metabolism. A cytochrome P450 monooxygenase involved in the metabolism of various endogenous substrates, including fatty acids, steroid hormones and vitamins. Mechanistically, uses molecular oxygen inserting one oxygen atom into a substrate, and reducing the second into a water molecule, with two electrons provided by NADPH via cytochrome P450 reductase (NADPH--hemoprotein reductase). Catalyzes the hydroxylation of carbon-hydrogen bonds. Exhibits high catalytic activity for the formation of hydroxyestrogens from estrone (E1) and 17beta-estradiol (E2), namely 2-hydroxy E1 and E2. Metabolizes cholesterol toward 25-hydroxycholesterol, a physiological regulator of cellular cholesterol homeostasis. May act as a major enzyme for all-trans retinoic acid biosynthesis in the liver. Catalyzes two successive oxidative transformation of all-trans retinol to all-trans retinal and then to the active form all-trans retinoic acid. Primarily catalyzes stereoselective epoxidation of the last double bond of polyunsaturated fatty acids (PUFA), displaying a strong preference for the (R,S) stereoisomer. Catalyzes bisallylic hydroxylation and omega-1 hydroxylation of PUFA. May also participate in eicosanoids metabolism by converting hydroperoxide species into oxo metabolites (lipoxygenase-like reaction, NADPH-independent). Plays a role in the oxidative metabolism of xenobiotics. Catalyzes the N-hydroxylation of heterocyclic amines and the O-deethylation of phenacetin. Metabolizes caffeine via N3-demethylation. This chain is Cytochrome P450 1A2 (Cyp1a2), found in Mus musculus (Mouse).